The following is a 292-amino-acid chain: Formamidopyrimidine-DNA glycosylase (292 aa).

Residue P2 is the Schiff-base intermediate with DNA of the active site. The active-site Proton donor is E3. K58 serves as the catalytic Proton donor; for beta-elimination activity. DNA-binding residues include H103, R122, and K165. The FPG-type zinc-finger motif lies at 256 to 292 (RVYDRALHPCPTPGCKGEISRITQGGRSSFFCSMCQK). The Proton donor; for delta-elimination activity role is filled by R282.

It belongs to the FPG family. As to quaternary structure, monomer. Zn(2+) serves as cofactor.

It catalyses the reaction Hydrolysis of DNA containing ring-opened 7-methylguanine residues, releasing 2,6-diamino-4-hydroxy-5-(N-methyl)formamidopyrimidine.. It carries out the reaction 2'-deoxyribonucleotide-(2'-deoxyribose 5'-phosphate)-2'-deoxyribonucleotide-DNA = a 3'-end 2'-deoxyribonucleotide-(2,3-dehydro-2,3-deoxyribose 5'-phosphate)-DNA + a 5'-end 5'-phospho-2'-deoxyribonucleoside-DNA + H(+). Functionally, involved in base excision repair of DNA damaged by oxidation or by mutagenic agents. Acts as a DNA glycosylase that recognizes and removes damaged bases. Has a preference for oxidized purines, such as 7,8-dihydro-8-oxoguanine (8-oxoG). Has AP (apurinic/apyrimidinic) lyase activity and introduces nicks in the DNA strand. Cleaves the DNA backbone by beta-delta elimination to generate a single-strand break at the site of the removed base with both 3'- and 5'-phosphates. The chain is Formamidopyrimidine-DNA glycosylase from Methylocella silvestris (strain DSM 15510 / CIP 108128 / LMG 27833 / NCIMB 13906 / BL2).